Consider the following 349-residue polypeptide: Holliday junction branch migration complex subunit RuvB (349 aa).

The large ATPase domain (RuvB-L) stretch occupies residues M1–Y183. Residues L22, R23, G64, K67, T68, T69, E130–F132, R173, Y183, and R220 each bind ATP. T68 is a Mg(2+) binding site. The interval T184 to E254 is small ATPAse domain (RuvB-S). Residues S257–E349 are head domain (RuvB-H). The DNA site is built by R293, R312, and R317.

It belongs to the RuvB family. Homohexamer. Forms an RuvA(8)-RuvB(12)-Holliday junction (HJ) complex. HJ DNA is sandwiched between 2 RuvA tetramers; dsDNA enters through RuvA and exits via RuvB. An RuvB hexamer assembles on each DNA strand where it exits the tetramer. Each RuvB hexamer is contacted by two RuvA subunits (via domain III) on 2 adjacent RuvB subunits; this complex drives branch migration. In the full resolvosome a probable DNA-RuvA(4)-RuvB(12)-RuvC(2) complex forms which resolves the HJ.

Its subcellular location is the cytoplasm. It catalyses the reaction ATP + H2O = ADP + phosphate + H(+). The RuvA-RuvB-RuvC complex processes Holliday junction (HJ) DNA during genetic recombination and DNA repair, while the RuvA-RuvB complex plays an important role in the rescue of blocked DNA replication forks via replication fork reversal (RFR). RuvA specifically binds to HJ cruciform DNA, conferring on it an open structure. The RuvB hexamer acts as an ATP-dependent pump, pulling dsDNA into and through the RuvAB complex. RuvB forms 2 homohexamers on either side of HJ DNA bound by 1 or 2 RuvA tetramers; 4 subunits per hexamer contact DNA at a time. Coordinated motions by a converter formed by DNA-disengaged RuvB subunits stimulates ATP hydrolysis and nucleotide exchange. Immobilization of the converter enables RuvB to convert the ATP-contained energy into a lever motion, pulling 2 nucleotides of DNA out of the RuvA tetramer per ATP hydrolyzed, thus driving DNA branch migration. The RuvB motors rotate together with the DNA substrate, which together with the progressing nucleotide cycle form the mechanistic basis for DNA recombination by continuous HJ branch migration. Branch migration allows RuvC to scan DNA until it finds its consensus sequence, where it cleaves and resolves cruciform DNA. This chain is Holliday junction branch migration complex subunit RuvB, found in Rhodopseudomonas palustris (strain ATCC BAA-98 / CGA009).